We begin with the raw amino-acid sequence, 529 residues long: NAD(P)H-quinone oxidoreductase chain 4 1 (529 aa).

The next 13 membrane-spanning stretches (helical) occupy residues 4 to 24 (FPWL…IPFI), 36 to 56 (WYAL…FTNF), 91 to 111 (LILL…PVTL), 115 to 135 (LFYF…AVQD), 137 to 157 (LVFF…LAIW), 169 to 189 (FILY…AMAF), 209 to 229 (GFQL…LPIV), 243 to 263 (TAPV…YALI), 277 to 297 (FAPV…LTSY), 314 to 334 (IGFV…GAVL), 335 to 355 (QMVS…ATYD), 387 to 407 (LALP…GFAT), and 417 to 437 (VIVV…LLSM).

Belongs to the complex I subunit 4 family.

The protein resides in the cellular thylakoid membrane. The catalysed reaction is a plastoquinone + NADH + (n+1) H(+)(in) = a plastoquinol + NAD(+) + n H(+)(out). The enzyme catalyses a plastoquinone + NADPH + (n+1) H(+)(in) = a plastoquinol + NADP(+) + n H(+)(out). In terms of biological role, NDH-1 shuttles electrons from NAD(P)H, via FMN and iron-sulfur (Fe-S) centers, to quinones in the respiratory chain. The immediate electron acceptor for the enzyme in this species is believed to be plastoquinone. Couples the redox reaction to proton translocation (for every two electrons transferred, four hydrogen ions are translocated across the cytoplasmic membrane), and thus conserves the redox energy in a proton gradient. The sequence is that of NAD(P)H-quinone oxidoreductase chain 4 1 from Thermosynechococcus vestitus (strain NIES-2133 / IAM M-273 / BP-1).